Here is a 217-residue protein sequence, read N- to C-terminus: Thiamine-phosphate synthase (217 aa).

4-amino-2-methyl-5-(diphosphooxymethyl)pyrimidine contacts are provided by residues 39–43 (QLRRK) and Asn-71. Asp-72 and Asp-91 together coordinate Mg(2+). A 4-amino-2-methyl-5-(diphosphooxymethyl)pyrimidine-binding site is contributed by Ser-110. 2-[(2R,5Z)-2-carboxy-4-methylthiazol-5(2H)-ylidene]ethyl phosphate is bound at residue 137–139 (SPT). A 4-amino-2-methyl-5-(diphosphooxymethyl)pyrimidine-binding site is contributed by Lys-140. 2-[(2R,5Z)-2-carboxy-4-methylthiazol-5(2H)-ylidene]ethyl phosphate contacts are provided by residues Gly-173 and 193-194 (IS).

Belongs to the thiamine-phosphate synthase family. Requires Mg(2+) as cofactor.

The enzyme catalyses 2-[(2R,5Z)-2-carboxy-4-methylthiazol-5(2H)-ylidene]ethyl phosphate + 4-amino-2-methyl-5-(diphosphooxymethyl)pyrimidine + 2 H(+) = thiamine phosphate + CO2 + diphosphate. It carries out the reaction 2-(2-carboxy-4-methylthiazol-5-yl)ethyl phosphate + 4-amino-2-methyl-5-(diphosphooxymethyl)pyrimidine + 2 H(+) = thiamine phosphate + CO2 + diphosphate. It catalyses the reaction 4-methyl-5-(2-phosphooxyethyl)-thiazole + 4-amino-2-methyl-5-(diphosphooxymethyl)pyrimidine + H(+) = thiamine phosphate + diphosphate. It participates in cofactor biosynthesis; thiamine diphosphate biosynthesis; thiamine phosphate from 4-amino-2-methyl-5-diphosphomethylpyrimidine and 4-methyl-5-(2-phosphoethyl)-thiazole: step 1/1. Condenses 4-methyl-5-(beta-hydroxyethyl)thiazole monophosphate (THZ-P) and 2-methyl-4-amino-5-hydroxymethyl pyrimidine pyrophosphate (HMP-PP) to form thiamine monophosphate (TMP). This Bordetella parapertussis (strain 12822 / ATCC BAA-587 / NCTC 13253) protein is Thiamine-phosphate synthase.